The following is a 241-amino-acid chain: Tetraspanin-1 (241 aa).

Helical transmembrane passes span Ile12 to Val32, Phe53 to Leu73, and Phe89 to Val109. Asn154 carries N-linked (GlcNAc...) asparagine glycosylation. Residues Ala212 to Val232 form a helical membrane-spanning segment.

It belongs to the tetraspanin (TM4SF) family. Interacts with SLC19A2. Interacts with NTRK1/TRKA.

The protein localises to the cell membrane. It localises to the lysosome membrane. In terms of biological role, structural component of specialized membrane microdomains known as tetraspanin-enriched microdomains (TERMs), which act as platforms for receptor clustering and signaling. Participates thereby in diverse biological functions such as cell signal transduction, adhesion, migration and protein trafficking. Regulates neuronal differentiation in response to NGF by facilitating NGF-mediated activation of NTRK1/TRKA receptor tyrosine kinase and subsequent downstream signaling pathways. Plays a role in the inhibition of TNFalpha-induced apoptosis. Mechanistically, inhibits the NF-kappa-B signaling pathway by blocking phosphorylation of CHUK. Also promotes the stability of the thiamine transporter 1/SLC19A2 in intestinal epithelial cells leading to an increase of thiamine uptake process. This chain is Tetraspanin-1 (Tspan1), found in Rattus norvegicus (Rat).